A 732-amino-acid polypeptide reads, in one-letter code: Catalase-peroxidase (732 aa).

A compositionally biased stretch (basic and acidic residues) spans 1-10 (MDAKTDDKAG). The tract at residues 1-26 (MDAKTDDKAGKCPVAHGPAPRGNRDW) is disordered. Residues 95-217 (WHSAGTYRTT…LGAVQMGLIY (123 aa)) constitute a cross-link (tryptophyl-tyrosyl-methioninium (Trp-Tyr) (with M-243)). The active-site Proton acceptor is the His-96. The tryptophyl-tyrosyl-methioninium (Tyr-Met) (with W-95) cross-link spans 217-243 (YVNPEGPNGNPDPLGSAKDIRETFARM). Residue His-258 coordinates heme b.

Belongs to the peroxidase family. Peroxidase/catalase subfamily. As to quaternary structure, homodimer or homotetramer. Heme b serves as cofactor. Formation of the three residue Trp-Tyr-Met cross-link is important for the catalase, but not the peroxidase activity of the enzyme.

It catalyses the reaction H2O2 + AH2 = A + 2 H2O. It carries out the reaction 2 H2O2 = O2 + 2 H2O. Functionally, bifunctional enzyme with both catalase and broad-spectrum peroxidase activity. In Rhodopseudomonas palustris (strain BisB18), this protein is Catalase-peroxidase.